A 465-amino-acid polypeptide reads, in one-letter code: Putative ABC transporter ATP-binding protein MG065 homolog (465 aa).

Positions 232–465 (IELKNVYKYI…PKQVEDINWI (234 aa)) constitute an ABC transporter domain. 268–275 (GPSGSGKT) contributes to the ATP binding site.

It belongs to the ABC transporter superfamily.

This chain is Putative ABC transporter ATP-binding protein MG065 homolog, found in Mycoplasma pneumoniae (strain ATCC 29342 / M129 / Subtype 1) (Mycoplasmoides pneumoniae).